The chain runs to 142 residues: UPF0310 protein PYRAB08750 (142 aa).

The protein belongs to the UPF0310 family.

The sequence is that of UPF0310 protein PYRAB08750 from Pyrococcus abyssi (strain GE5 / Orsay).